Here is a 351-residue protein sequence, read N- to C-terminus: Peptide chain release factor 1 (351 aa).

An N5-methylglutamine modification is found at Gln-229. Residues 278-297 (RVDDERSADRAAQVGSGDRS) are disordered.

This sequence belongs to the prokaryotic/mitochondrial release factor family. Post-translationally, methylated by PrmC. Methylation increases the termination efficiency of RF1.

It localises to the cytoplasm. Its function is as follows. Peptide chain release factor 1 directs the termination of translation in response to the peptide chain termination codons UAG and UAA. This Roseobacter denitrificans (strain ATCC 33942 / OCh 114) (Erythrobacter sp. (strain OCh 114)) protein is Peptide chain release factor 1.